The sequence spans 856 residues: Translation initiation factor IF-2 (856 aa).

The tr-type G domain occupies 356 to 526 (PRAPVVTVMG…LLIADLLELK (171 aa)). The interval 365-372 (GHVDHGKT) is G1. A GTP-binding site is contributed by 365 to 372 (GHVDHGKT). The G2 stretch occupies residues 390-394 (GITQH). The interval 412–415 (DTPG) is G3. GTP contacts are provided by residues 412-416 (DTPGH) and 466-469 (NKID). Positions 466–469 (NKID) are G4. Positions 502–504 (SAK) are G5.

Belongs to the TRAFAC class translation factor GTPase superfamily. Classic translation factor GTPase family. IF-2 subfamily.

Its subcellular location is the cytoplasm. Its function is as follows. One of the essential components for the initiation of protein synthesis. Protects formylmethionyl-tRNA from spontaneous hydrolysis and promotes its binding to the 30S ribosomal subunits. Also involved in the hydrolysis of GTP during the formation of the 70S ribosomal complex. In Ehrlichia ruminantium (strain Gardel), this protein is Translation initiation factor IF-2.